A 250-amino-acid chain; its full sequence is 5-oxoprolinase subunit A (250 aa).

Belongs to the LamB/PxpA family. In terms of assembly, forms a complex composed of PxpA, PxpB and PxpC.

The catalysed reaction is 5-oxo-L-proline + ATP + 2 H2O = L-glutamate + ADP + phosphate + H(+). Catalyzes the cleavage of 5-oxoproline to form L-glutamate coupled to the hydrolysis of ATP to ADP and inorganic phosphate. The polypeptide is 5-oxoprolinase subunit A (Staphylococcus aureus (strain NCTC 8325 / PS 47)).